An 806-amino-acid chain; its full sequence is DNA topoisomerase 1 (806 aa).

Positions 1–15 (MSVVSNHHSNGNGNS) are enriched in low complexity. The interval 1–236 (MSVVSNHHSN…KKEPPKKKVK (236 aa)) is disordered. A compositionally biased stretch (basic and acidic residues) spans 24-34 (DEIKKEVKDEP). 2 stretches are compositionally biased toward basic residues: residues 49-60 (RDKKEKKQKKRK) and 98-108 (EKKKSKKNNKK). A compositionally biased stretch (acidic residues) spans 113–127 (SSEDDDEESEGDVSE). Residues 128–137 (EDVKPQIHSD) show a composition bias toward basic and acidic residues. Residues 138–153 (DELEEEDEAPTTDDEE) show a composition bias toward acidic residues. Residues 159 to 176 (EKERRKKEKREKKERKEK) are compositionally biased toward basic residues. The segment covering 177-188 (KRLEKENRKIKE) has biased composition (basic and acidic residues). Over residues 189-199 (EDDEDSDDEDD) the composition is skewed to acidic residues. Over residues 210–229 (KGAEKSKPSTSKKDAGGKKE) the composition is skewed to basic and acidic residues. 3 interaction with DNA regions span residues 467–468 (KY), 530–535 (RAGNEK), and 634–636 (TVK). Positions 474–803 (SSKIKGEKDF…IDMTNSSDEE (330 aa)) constitute a Topo IB-type catalytic domain. Residue tyrosine 761 is the O-(3'-phospho-DNA)-tyrosine intermediate of the active site.

Belongs to the type IB topoisomerase family. As to expression, expressed in male germ cells and in mature sperm.

It localises to the nucleus. The protein resides in the nucleolus. It is found in the chromosome. The enzyme catalyses ATP-independent breakage of single-stranded DNA, followed by passage and rejoining.. Releases the supercoiling and torsional tension of DNA introduced during the DNA replication and transcription by transiently cleaving and rejoining one strand of the DNA duplex. Introduces a single-strand break via transesterification at a target site in duplex DNA. The scissile phosphodiester is attacked by the catalytic tyrosine of the enzyme, resulting in the formation of a DNA-(3'-phosphotyrosyl)-enzyme intermediate and the expulsion of a 5'-OH DNA strand. The free DNA strand then rotates around the intact phosphodiester bond on the opposing strand, thus removing DNA supercoils. Finally, in the religation step, the DNA 5'-OH attacks the covalent intermediate to expel the active-site tyrosine and restore the DNA phosphodiester backbone. Required for normal spermatogenesis and oogenesis. The protein is DNA topoisomerase 1 (top-1) of Caenorhabditis elegans.